Reading from the N-terminus, the 856-residue chain is Phosphatidylglycerol lysyltransferase (856 aa).

A run of 13 helical transmembrane segments spans residues 7 to 27 (ALSILKIVFPIAVLLFVIYQS), 51 to 71 (LFMLVLIGLLAVAAMSLYDYV), 88 to 108 (VSWIANSFNNVLGFGGLAGVG), 128 to 148 (IAWLTSSMLLGLSVFSIFVAA), 161 to 181 (PWLWAVVIGFALILPLSLAVS), 208 to 228 (SVVEWLMAGTVIYFALFAMGI), 235 to 255 (VFGVFVIAAIGGMISLVPGGF), 280 to 300 (IVLYRLAYSFIPFILGLFFAA), 342 to 362 (SLSLIVFVAGLIVLASVSLPI), 375 to 395 (ALLLFNGLSLSSALILLILPI), 420 to 440 (FLKGLNISAIFVLPMIIVLLV), 459 to 479 (IFAVALFTVALFNYNLIAGFI), and 501 to 521 (HATIMAIIIVPLFFLIFTVVY).

Belongs to the LPG synthase family.

Its subcellular location is the cell membrane. It catalyses the reaction L-lysyl-tRNA(Lys) + a 1,2-diacyl-sn-glycero-3-phospho-(1'-sn-glycerol) = a 1,2-diacyl-sn-glycero-3-phospho-1'-(3'-O-L-lysyl)-sn-glycerol + tRNA(Lys). Functionally, catalyzes the transfer of a lysyl group from L-lysyl-tRNA(Lys) to membrane-bound phosphatidylglycerol (PG), which produces lysylphosphatidylglycerol (LPG), one of the components of the bacterial membrane with a positive net charge. LPG synthesis contributes to the resistance to cationic antimicrobial peptides (CAMPs) and likely protects B.subtilis against its own CAMPs and against those produced by competiting microorganisms (bacteriocins). In fact, the modification of anionic phosphatidylglycerol with positively charged L-lysine results in repulsion of the peptides. This Bacillus subtilis (strain 168) protein is Phosphatidylglycerol lysyltransferase (mprF).